A 363-amino-acid chain; its full sequence is Chemerin-like receptor 1 (363 aa).

The Extracellular segment spans residues 1 to 39; the sequence is MDFEDYNSTYEDSYTDDFDTIVALEEFSPLEGRVVRIFL. N-linked (GlcNAc...) asparagine glycosylation occurs at Asn-7. A helical membrane pass occupies residues 40 to 60; the sequence is VVVYSIICFLGILGNGLVIVI. Residues 61-71 are Cytoplasmic-facing; it reads ATFKMKKTVNT. The helical transmembrane segment at 72 to 92 threads the bilayer; sequence VWFLNLAVADFLFNVFLPIHI. Residues 93–109 are Extracellular-facing; the sequence is AYAAMDYHWVFGTAMCK. A disulfide bond links Cys-108 and Cys-185. A helical membrane pass occupies residues 110–130; that stretch reads ISNFLLIHNMYTSVFLLTVIS. Topologically, residues 131-152 are cytoplasmic; the sequence is FDRCISVLLPVWSQNHRSIRLA. A helical membrane pass occupies residues 153–173; it reads YMACVVIWVLAFFLSSPSLVF. Topologically, residues 174–220 are extracellular; sequence RDTAHLHGKISCFNNFSLSATSSSSWPTHPQMDTVGFGRQMVVTITR. Asn-188 is a glycosylation site (N-linked (GlcNAc...) asparagine). A helical transmembrane segment spans residues 221–241; sequence FLCGFLVPVLIISACYFTIVY. The Cytoplasmic segment spans residues 242–256; sequence KLRRNRLAKTKKPFK. Residues 257 to 277 traverse the membrane as a helical segment; the sequence is IIVTIIITFFLCWCPYHTLYL. The Extracellular segment spans residues 278-283; that stretch reads LELHHR. The chain crosses the membrane as a helical span at residues 284–304; sequence AMPGSVFSLGVPLATAIAIAN. Residues 305-363 lie on the Cytoplasmic side of the membrane; it reads SCMNPILYVFMGQDFKKFKVALFSRLVNALSEDTGHSSYPSHRSFTKMSSMNERETSML. Position 335 is a phosphoserine (Ser-335). The segment at 337-363 is disordered; sequence DTGHSSYPSHRSFTKMSSMNERETSML. Thr-338 bears the Phosphothreonine mark. A compositionally biased stretch (polar residues) spans 340–355; sequence HSSYPSHRSFTKMSSM. A phosphoserine mark is found at Ser-345, Ser-348, and Ser-354.

This sequence belongs to the chemokine-like receptor (CMKLR) family. Predominantly expressed in spleen and temperately in adipose tissue.

It is found in the cell membrane. Receptor for the chemoattractant adipokine chemerin/RARRES2 and for the omega-3 fatty acid derived molecule resolvin E1. Interaction with RARRES2 initiates activation of G proteins G(i)/G(o) and beta-arrestin pathways inducing cellular responses via second messenger pathways such as intracellular calcium mobilization, phosphorylation of MAP kinases MAPK1/MAPK3 (ERK1/2), TYRO3, MAPK14/P38MAPK and PI3K leading to multifunctional effects, like, reduction of immune responses, enhancing of adipogenesis and angionesis. Resolvin E1 down-regulates cytokine production in macrophages by reducing the activation of MAPK1/3 (ERK1/2) and NF-kappa-B. Positively regulates adipogenesis and adipocyte metabolism. This is Chemerin-like receptor 1 (CMLKR1) from Sus scrofa (Pig).